A 1113-amino-acid polypeptide reads, in one-letter code: uncharacterized protein (1113 aa).

Position 313-320 (G313–S320) interacts with ATP.

The protein belongs to the DNA2/NAM7 helicase family.

This is an uncharacterized protein from Mycoplasma pneumoniae (strain ATCC 29342 / M129 / Subtype 1) (Mycoplasmoides pneumoniae).